The following is a 79-amino-acid chain: Exodeoxyribonuclease 7 small subunit (79 aa).

Belongs to the XseB family. Heterooligomer composed of large and small subunits.

It is found in the cytoplasm. It carries out the reaction Exonucleolytic cleavage in either 5'- to 3'- or 3'- to 5'-direction to yield nucleoside 5'-phosphates.. In terms of biological role, bidirectionally degrades single-stranded DNA into large acid-insoluble oligonucleotides, which are then degraded further into small acid-soluble oligonucleotides. This chain is Exodeoxyribonuclease 7 small subunit, found in Lactococcus lactis subsp. cremoris (strain SK11).